Reading from the N-terminus, the 27-residue chain is Phospholipase A2 2 (27 aa).

The disordered stretch occupies residues 1-27; it reads FMKVIDPGTKWCGPGNKAADDTDNGKN. Trp11, Gly13, and Gly15 together coordinate Ca(2+). Over residues 18–27 the composition is skewed to basic and acidic residues; it reads AADDTDNGKN.

The protein belongs to the phospholipase A2 family. Ca(2+) serves as cofactor. As to expression, expressed by the venom gland.

Its subcellular location is the secreted. The catalysed reaction is a 1,2-diacyl-sn-glycero-3-phosphocholine + H2O = a 1-acyl-sn-glycero-3-phosphocholine + a fatty acid + H(+). In terms of biological role, PLA2 catalyzes the calcium-dependent hydrolysis of the 2-acyl groups in 3-sn-phosphoglycerides. This Opisthacanthus cayaporum (South American scorpion) protein is Phospholipase A2 2.